The primary structure comprises 492 residues: Phytoene desaturase (lycopene-forming) (492 aa).

5 to 38 (TVIGAGFGGLALAIRLQAAGIPVLLLEQRDKPGG) serves as a coordination point for FAD.

It belongs to the carotenoid/retinoid oxidoreductase family. FAD is required as a cofactor.

It is found in the cell membrane. The catalysed reaction is 15-cis-phytoene + 4 A = all-trans-lycopene + 4 AH2. Its pathway is carotenoid biosynthesis; lycopene biosynthesis. Inhibited by NAD and NADP. Converts 15-cis-phytoene into all-trans-lycopene via the intermediary of all-trans-phytofluene, all-trans-zeta-carotene and all-trans-neurosporene, by the introduction of four double bonds. The chain is Phytoene desaturase (lycopene-forming) (crtI) from Pantoea ananas (Erwinia uredovora).